The chain runs to 640 residues: Endoglucanase 1 (640 aa).

Residues 1 to 24 (MARRGGAAASSSMANLLGVALVLA) form the signal peptide. The active-site Nucleophile is D94. Catalysis depends on residues H433, D485, and E494. N-linked (GlcNAc...) asparagine glycans are attached at residues N528 and N548.

It belongs to the glycosyl hydrolase 9 (cellulase E) family. In terms of tissue distribution, expressed in roots, leaf sheaths and flowers.

It is found in the secreted. It carries out the reaction Endohydrolysis of (1-&gt;4)-beta-D-glucosidic linkages in cellulose, lichenin and cereal beta-D-glucans.. The chain is Endoglucanase 1 (GLU7) from Oryza sativa subsp. japonica (Rice).